A 903-amino-acid polypeptide reads, in one-letter code: MVTNLLSKVFGSRNDRLLRSVNKVVAQINALEQEFAALSDGQLQAKTDQFRDRLAADESLDELIPEAFAVVREAGKRVLGMRHFDVQLLGGIVLHDGKIAEMRTGEGKTLVATAAAYLNALPGKGVHVVTVNDYLAQRDAQWMGPLYQFLGLSTGIIASNMDPGARKAAYMADITYGTNNEFGFDYLRDNMAFSLEEKVQRELHYAIVDEVDSILIDEARTPLIISGAAEQSSELYRQINVFMPRLKKQEREDGPGDYTVDEKARQVYLTEAGHEHAEQVMLESGLMQEGESLYDAANIGLMHHFNAALRAHVLFHKDVDYIVKDDQVVIVDEFTGRTMPGRRWSEGLHQAVEAKEGVSIQSENQTLASITFQNYFRLYEKLAGMTGTADTEAYEFQQIYGLEVVVIPTHLPMVRVDHGDQVYLTAEEKYQAIIEDIKDCHTRGQPVLVGTASIETSEHLSGLLKKEKVEHRVLNAKFHEKEAEIIAQAGRPGTVTIATNMAGRGTDIVLGGSLDAELATLGENADKAKKEEIRRRWQEGHDQVVAAGGLHIIGTERHESRRIDNQLRGRSGRQGDPGSTRFYLSLEDNLMRIFASERISGLMQRLGMEEGEAIEHPWVTRAIENAQRKVEGHNFDIRKQLLEFDDVANDQRTVIYQQRNELMAAEDVSDMVQSIRQGVIHSLVSQYIPPGSIDEQWDIPGLQEGLASEFGLEVDIAGWLEADEGLHEETLRERIMEAMEGAYGEKETLVGPQVMRHFEKAAMLQVLDSQWKEHLAMMDHLRQGIHLRGYAQKNPKQEFKREAFELFQEMLERIKHDVIALLSKVQVRTEADVEAVEHQRRAASAVEYQHAAASTMADSSGDVKSSTAESKAPYVRDGRKVGRNEPCPCGSGKKYKHCHGKLN.

ATP contacts are provided by residues glutamine 87, 105–109, and aspartate 507; that span reads GEGKT. The tract at residues 854–893 is disordered; the sequence is STMADSSGDVKSSTAESKAPYVRDGRKVGRNEPCPCGSGK. The span at 856-869 shows a compositional bias: polar residues; that stretch reads MADSSGDVKSSTAE. A compositionally biased stretch (basic and acidic residues) spans 874–883; that stretch reads YVRDGRKVGR. 4 residues coordinate Zn(2+): cysteine 887, cysteine 889, cysteine 898, and histidine 899.

It belongs to the SecA family. In terms of assembly, monomer and homodimer. Part of the essential Sec protein translocation apparatus which comprises SecA, SecYEG and auxiliary proteins SecDF-YajC and YidC. Zn(2+) is required as a cofactor.

Its subcellular location is the cell inner membrane. The protein localises to the cytoplasm. The catalysed reaction is ATP + H2O + cellular proteinSide 1 = ADP + phosphate + cellular proteinSide 2.. Functionally, part of the Sec protein translocase complex. Interacts with the SecYEG preprotein conducting channel. Has a central role in coupling the hydrolysis of ATP to the transfer of proteins into and across the cell membrane, serving both as a receptor for the preprotein-SecB complex and as an ATP-driven molecular motor driving the stepwise translocation of polypeptide chains across the membrane. The chain is Protein translocase subunit SecA from Nitrosococcus oceani (strain ATCC 19707 / BCRC 17464 / JCM 30415 / NCIMB 11848 / C-107).